The following is a 369-amino-acid chain: tRNA 2-selenouridine synthase (369 aa).

Positions 15–138 (FLNQHPMMDV…MRQYLIGVIE (124 aa)) constitute a Rhodanese domain. Cys98 (S-selanylcysteine intermediate) is an active-site residue.

Belongs to the SelU family. As to quaternary structure, monomer.

The enzyme catalyses 5-methylaminomethyl-2-thiouridine(34) in tRNA + selenophosphate + (2E)-geranyl diphosphate + H2O + H(+) = 5-methylaminomethyl-2-selenouridine(34) in tRNA + (2E)-thiogeraniol + phosphate + diphosphate. It carries out the reaction 5-methylaminomethyl-2-thiouridine(34) in tRNA + (2E)-geranyl diphosphate = 5-methylaminomethyl-S-(2E)-geranyl-thiouridine(34) in tRNA + diphosphate. It catalyses the reaction 5-methylaminomethyl-S-(2E)-geranyl-thiouridine(34) in tRNA + selenophosphate + H(+) = 5-methylaminomethyl-2-(Se-phospho)selenouridine(34) in tRNA + (2E)-thiogeraniol. The catalysed reaction is 5-methylaminomethyl-2-(Se-phospho)selenouridine(34) in tRNA + H2O = 5-methylaminomethyl-2-selenouridine(34) in tRNA + phosphate. Its function is as follows. Involved in the post-transcriptional modification of the uridine at the wobble position (U34) of tRNA(Lys), tRNA(Glu) and tRNA(Gln). Catalyzes the conversion of 2-thiouridine (S2U-RNA) to 2-selenouridine (Se2U-RNA). Acts in a two-step process involving geranylation of 2-thiouridine (S2U) to S-geranyl-2-thiouridine (geS2U) and subsequent selenation of the latter derivative to 2-selenouridine (Se2U) in the tRNA chain. This chain is tRNA 2-selenouridine synthase, found in Shewanella sp. (strain W3-18-1).